Reading from the N-terminus, the 258-residue chain is tRNA (guanine-N(1)-)-methyltransferase (258 aa).

Residues Gly-122 and 142–147 (LGDFVL) each bind S-adenosyl-L-methionine.

The protein belongs to the RNA methyltransferase TrmD family. Homodimer.

It localises to the cytoplasm. The catalysed reaction is guanosine(37) in tRNA + S-adenosyl-L-methionine = N(1)-methylguanosine(37) in tRNA + S-adenosyl-L-homocysteine + H(+). Functionally, specifically methylates guanosine-37 in various tRNAs. The chain is tRNA (guanine-N(1)-)-methyltransferase from Hahella chejuensis (strain KCTC 2396).